The chain runs to 158 residues: Na(+)/H(+) antiporter subunit E (158 aa).

Helical transmembrane passes span 22 to 41 and 54 to 76; these read YTAV…LFVL and IWAI…IDVI.

The protein belongs to the CPA3 antiporters (TC 2.A.63) subunit E family. In terms of assembly, forms a heterooligomeric complex that consists of seven subunits: MrpA, MrpB, MrpC, MrpD, MrpE, MrpF and MrpG.

The protein localises to the cell membrane. In terms of biological role, mnh complex is a Na(+)Li(+)/H(+) antiporter involved in Na(+) and/or Li(+) excretion and Na(+) resistance. Na(+)/H(+) antiport consumes a transmembrane electrical potential, and is thus inferred to be electrogenic. Does not transport K(+), Ca(2+) or Mg(2+). Functionally, mrp complex is a Na(+)/H(+) antiporter involved in Na(+) excretion and Na(+) resistance. This is Na(+)/H(+) antiporter subunit E (mrpE) from Alkalihalophilus pseudofirmus (strain ATCC BAA-2126 / JCM 17055 / OF4) (Bacillus pseudofirmus).